The primary structure comprises 105 residues: Large ribosomal subunit protein uL23 (105 aa).

This sequence belongs to the universal ribosomal protein uL23 family. In terms of assembly, part of the 50S ribosomal subunit. Contacts protein L29, and trigger factor when it is bound to the ribosome.

Its function is as follows. One of the early assembly proteins it binds 23S rRNA. One of the proteins that surrounds the polypeptide exit tunnel on the outside of the ribosome. Forms the main docking site for trigger factor binding to the ribosome. This Janthinobacterium sp. (strain Marseille) (Minibacterium massiliensis) protein is Large ribosomal subunit protein uL23.